Here is a 258-residue protein sequence, read N- to C-terminus: Small ribosomal subunit protein mS40 (258 aa).

The transit peptide at 1–35 (MAASVLNVLLRRLPYFSPFRGAYGVQVPLQTLCTK) directs the protein to the mitochondrion. Serine 49 carries the phosphoserine modification. A disordered region spans residues 221–258 (QGHLREESGPPPESMPKVPLTAPNEATSTEQAGPQSAL). A compositionally biased stretch (polar residues) spans 244–258 (NEATSTEQAGPQSAL).

This sequence belongs to the bacterial ribosomal protein bS18 family. Mitochondrion-specific ribosomal protein mS40 subfamily. Component of the mitochondrial ribosome small subunit (28S) which comprises a 12S rRNA and about 30 distinct proteins.

The protein resides in the mitochondrion. The protein is Small ribosomal subunit protein mS40 of Bos taurus (Bovine).